We begin with the raw amino-acid sequence, 311 residues long: Progestin and adipoQ receptor family member 3 (311 aa).

The segment at 1 to 20 (MHQKLLKSAHYIELGSYQYW) is required for interaction with SREBF2. The Cytoplasmic segment spans residues 1 to 70 (MHQKLLKSAH…KSLFILSNET (70 aa)). Residues 41–60 (KDNPYITDGYRAYLPSRLCI) form a required for interaction with SCAP region. The tract at residues 61 to 71 (KSLFILSNETV) is golgi targeting. A helical membrane pass occupies residues 71-91 (VNIWSHLLGFFLFFTLGIYDM). Topologically, residues 92-104 (TSVLPSASASRED) are lumenal. Residues 105–125 (FVICSICLFCFQVCMLCSVGY) traverse the membrane as a helical segment. Residues 126 to 145 (HLFSCHRSEKTCRRWMALDY) are Cytoplasmic-facing. The chain crosses the membrane as a helical span at residues 146–166 (AGISIGILGCYVSGVFYAFYC). The Lumenal segment spans residues 167–172 (NNYWRQ). Residues 173-193 (VYLITVLAMILAVFFAQIHPS) form a helical membrane-spanning segment. Over 194–203 (YLTQQWQRLR) the chain is Cytoplasmic. Residues 204–224 (PIIFCSVSGYGVIPTLHWVWL) traverse the membrane as a helical segment. The Lumenal portion of the chain corresponds to 225-235 (NGGVSAPIVQD). Residues 236-256 (FAPRVIVMYVIALLAFLFYIS) form a helical membrane-spanning segment. At 257 to 275 (KVPERYFPGQLNYLGSSHQ) the chain is on the cytoplasmic side. Residues 276-296 (IWHVLAVVMLYWWHQSTVYVM) traverse the membrane as a helical segment. Over 297–311 (QYRHSKPCPDYVSHL) the chain is Lumenal. The golgi targeting stretch occupies residues 299–303 (RHSKP).

This sequence belongs to the ADIPOR family. Interacts with SCAP and SREBF2; the interactions are direct, increase in low cholesterol conditions and tether SCAP:SREBP complex to the Golgi apparatus. Interaction with SCAP is mutually exclusive with INSIG1. In hepatocytes, interacts with PPARA and HUWE1; the interactions promote PPARA poylubiquitination and HUWE1-mediated degradation. In macrophages, interacts with PPARG and STUB1; the interactions promote PPARG poylubiquitination and STUB1-mediated degradation.

It is found in the golgi apparatus membrane. In terms of biological role, golgi-anchored protein which modulates its interactors acitivies by tethering them to the Golgi apparatus. Functions as a spatial regulator of RAF1 kinase by sequestrating it to the Golgi apparatus. Acts as a positive regulator of cholesterol biosynthesis by mediating the anchoring of the SCAP:SREBP complex in the Golgi apparatus, thereby promoting SCAP:SREBF2 complex formation, potentiating SREBF2 and SREBF1 processing and enhancing lipid synthesis. Also regulates PPARA and PPARG functions by mediating their interaction with E3 ubiquitin ligases, such as STUB1 or HUWE1, leading to their polyubiquitination and proteasome-mediated degradation. The polypeptide is Progestin and adipoQ receptor family member 3 (Mus musculus (Mouse)).